The sequence spans 380 residues: Actin-like protein arp10 (380 aa).

This sequence belongs to the actin family. ARP10 subfamily.

It localises to the cytoplasm. The protein resides in the cytoskeleton. It is found in the nucleus. This chain is Actin-like protein arp10 (arp10), found in Schizosaccharomyces pombe (strain 972 / ATCC 24843) (Fission yeast).